A 126-amino-acid polypeptide reads, in one-letter code: DNA-directed RNA polymerase subunit omega (126 aa).

This sequence belongs to the RNA polymerase subunit omega family. The RNAP catalytic core consists of 2 alpha, 1 beta, 1 beta' and 1 omega subunit. When a sigma factor is associated with the core the holoenzyme is formed, which can initiate transcription.

The catalysed reaction is RNA(n) + a ribonucleoside 5'-triphosphate = RNA(n+1) + diphosphate. Its function is as follows. Promotes RNA polymerase assembly. Latches the N- and C-terminal regions of the beta' subunit thereby facilitating its interaction with the beta and alpha subunits. The chain is DNA-directed RNA polymerase subunit omega from Rickettsia felis (strain ATCC VR-1525 / URRWXCal2) (Rickettsia azadi).